Here is a 34-residue protein sequence, read N- to C-terminus: MSDINAARLPSFFFPIPCISDDIEMVLTRGESLC.

The propeptide occupies 1 to 10; it reads MSDINAARLP. Positions 11–17 form a cross-link, cyclopeptide (Ser-Pro); sequence SFFFPIP. A propeptide spanning residues 18-34 is cleaved from the precursor; the sequence is CISDDIEMVLTRGESLC.

The protein belongs to the MSDIN fungal toxin family. Processed by the macrocyclase-peptidase enzyme POPB to yield a cyclic decapeptide. POPB first removes 10 residues from the N-terminus. Conformational trapping of the remaining peptide forces the enzyme to release this intermediate rather than proceed to macrocyclization. The enzyme rebinds the remaining peptide in a different conformation and catalyzes macrocyclization of the N-terminal 7 residues.

Functionally, cyclic heptapeptide that belongs to the MSDIN-like toxin family responsible for a large number of food poisoning cases and deaths. Cycloaminide B is non-toxic to mammals but shows immunosuppressive activity, probably through the inhibition of the action of interleukin-1 and interleukin-2. This is Cycloamanide B proprotein from Amanita phalloides (Death cap).